The sequence spans 426 residues: Methylamine dehydrogenase heavy chain (426 aa).

The first 31 residues, 1–31 (MASARESTPRYLTLIGATLACSALALGAAQA), serve as a signal peptide directing secretion. A disordered region spans residues 32–64 (QTEPAEPEAPAETAAADAAGQTEGQRGAAEAAA). Cysteine 221 and cysteine 236 form a disulfide bridge.

It belongs to the aromatic amine dehydrogenase heavy chain family. Tetramer of two light and two heavy chains.

The protein resides in the periplasm. The enzyme catalyses 2 oxidized [amicyanin] + methylamine + H2O = 2 reduced [amicyanin] + formaldehyde + NH4(+) + 2 H(+). In terms of biological role, methylamine dehydrogenase carries out the oxidation of methylamine. Electrons are passed from methylamine dehydrogenase to amicyanin. The polypeptide is Methylamine dehydrogenase heavy chain (mauB) (Paracoccus versutus (Thiobacillus versutus)).